A 476-amino-acid polypeptide reads, in one-letter code: Membrane-bound lytic murein transglycosylase F (476 aa).

The first 22 residues, 1–22 (MTRFLFALILGFLLTACQQVTV), serve as a signal peptide directing secretion. Residues 23-257 (DETEFVPKKL…HLNEKYFGHV (235 aa)) are non-LT domain. Residues 258-476 (KRFDYVDTRA…AGTLSPEQPK (219 aa)) form an LT domain region. Residue Glu-302 is part of the active site. The disordered stretch occupies residues 446–476 (SKQQNPEEEPSDLASEEPAIPAGTLSPEQPK). Positions 451–460 (PEEEPSDLAS) are enriched in acidic residues.

The protein in the N-terminal section; belongs to the bacterial solute-binding protein 3 family. This sequence in the C-terminal section; belongs to the transglycosylase Slt family.

The protein resides in the cell outer membrane. The catalysed reaction is Exolytic cleavage of the (1-&gt;4)-beta-glycosidic linkage between N-acetylmuramic acid (MurNAc) and N-acetylglucosamine (GlcNAc) residues in peptidoglycan, from either the reducing or the non-reducing ends of the peptidoglycan chains, with concomitant formation of a 1,6-anhydrobond in the MurNAc residue.. Functionally, murein-degrading enzyme that degrades murein glycan strands and insoluble, high-molecular weight murein sacculi, with the concomitant formation of a 1,6-anhydromuramoyl product. Lytic transglycosylases (LTs) play an integral role in the metabolism of the peptidoglycan (PG) sacculus. Their lytic action creates space within the PG sacculus to allow for its expansion as well as for the insertion of various structures such as secretion systems and flagella. The polypeptide is Membrane-bound lytic murein transglycosylase F (Shewanella baltica (strain OS155 / ATCC BAA-1091)).